A 373-amino-acid polypeptide reads, in one-letter code: ATP phosphoribosyltransferase regulatory subunit (373 aa).

The protein belongs to the class-II aminoacyl-tRNA synthetase family. HisZ subfamily. In terms of assembly, heteromultimer composed of HisG and HisZ subunits.

Its subcellular location is the cytoplasm. It functions in the pathway amino-acid biosynthesis; L-histidine biosynthesis; L-histidine from 5-phospho-alpha-D-ribose 1-diphosphate: step 1/9. Required for the first step of histidine biosynthesis. May allow the feedback regulation of ATP phosphoribosyltransferase activity by histidine. The polypeptide is ATP phosphoribosyltransferase regulatory subunit (Rhizobium leguminosarum bv. trifolii (strain WSM2304)).